Consider the following 504-residue polypeptide: Facilitated trehalose transporter Tret1 (504 aa).

The Cytoplasmic portion of the chain corresponds to 1 to 39; that stretch reads MELNNKEDSPRHTVPFVRQITEDGKAKLEIYRPTTNPIY. A helical transmembrane segment spans residues 40-60; the sequence is IYTQILAAIAVSMGSMVVGFA. The Extracellular segment spans residues 61–87; sequence SAYTSPALVSMQNTTITSFKVTEQEAS. N-linked (GlcNAc...) asparagine glycosylation occurs at Asn73. The helical transmembrane segment at 88-108 threads the bilayer; that stretch reads WVGGIMPLAGLAGGIAGGPFI. The Cytoplasmic portion of the chain corresponds to 109-120; the sequence is EYLGRKNTILAT. A helical transmembrane segment spans residues 121-141; that stretch reads AVPFIVAWLLIAFANSIWMVL. The Extracellular segment spans residues 142–145; sequence AGRA. The helical transmembrane segment at 146–166 threads the bilayer; that stretch reads LSGFCVGIASLSLPVYLGETV. The Cytoplasmic segment spans residues 167–171; the sequence is QPEVR. The chain crosses the membrane as a helical span at residues 172 to 192; it reads GTLGLLPTAFGNIGILICFVA. Residues 193-199 lie on the Extracellular side of the membrane; sequence GKYVNWS. N-linked (GlcNAc...) asparagine glycosylation is present at Asn197. Residues 200 to 220 traverse the membrane as a helical segment; that stretch reads GLAFIGSILPIPFMVLTLLIP. Over 221–283 the chain is Cytoplasmic; it reads ETPRWFVTRG…DLMKRSNLKP (63 aa). The helical transmembrane segment at 284–304 threads the bilayer; the sequence is LLIALGLMFFQQLSGINAVIF. Residues 305–320 lie on the Extracellular side of the membrane; that stretch reads YTVSIFKDAGSTIDEN. The chain crosses the membrane as a helical span at residues 321-341; it reads LCTIIVGVVNFGATFFATVLI. Over 342–347 the chain is Cytoplasmic; that stretch reads DRLGRK. The helical transmembrane segment at 348-368 threads the bilayer; that stretch reads ILLYISEVAMVITLLTLGTFF. Topologically, residues 369-387 are extracellular; it reads YYKNSGNDVSNIGWLPLAS. Residues 388-408 form a helical membrane-spanning segment; sequence FVIYVIGFSSGVGPIPWLMLG. Residues 409-424 are Cytoplasmic-facing; sequence EILPGKIRGSAASVAT. Residues 425–445 traverse the membrane as a helical segment; it reads GFNWTCTFIVTKTFADIVAAI. Residues 446-448 lie on the Extracellular side of the membrane; sequence GNH. Residues 449-469 form a helical membrane-spanning segment; it reads GAFWFFGVICLIGLFFVIFFV. Residues 470 to 504 are Cytoplasmic-facing; that stretch reads PETQGKSLEEIERKMMGRVRRMSSVANMKPLSFNM.

It belongs to the major facilitator superfamily. Sugar transporter (TC 2.A.1.1) family. Trehalose transporter subfamily. In terms of tissue distribution, highest expression in the fat body. Not expressed in other tissues including the midgut, muscle, and integuments after 24 hours of dehydration.

The protein resides in the cell membrane. In terms of biological role, high-capacity facilitative transporter for trehalose, required to induce anhydrobiosis. Anhydrobiotic larvae can survive almost complete dehydration. Does not transport maltose, sucrose or lactose. Mediates the bidirectional transfer of trehalose. Responsible for the transport of trehalose synthesized in the fat body and the incorporation of trehalose into other tissues that require a carbon source, thereby regulating trehalose levels in the hemolymph. This is Facilitated trehalose transporter Tret1 from Polypedilum vanderplanki (Sleeping chironomid midge).